The sequence spans 352 residues: Uroporphyrinogen decarboxylase (352 aa).

Substrate contacts are provided by residues 26-30 (RQAGR), D76, Y153, S208, and H323.

The protein belongs to the uroporphyrinogen decarboxylase family. Homodimer.

The protein resides in the cytoplasm. It carries out the reaction uroporphyrinogen III + 4 H(+) = coproporphyrinogen III + 4 CO2. It functions in the pathway porphyrin-containing compound metabolism; protoporphyrin-IX biosynthesis; coproporphyrinogen-III from 5-aminolevulinate: step 4/4. Its function is as follows. Catalyzes the decarboxylation of four acetate groups of uroporphyrinogen-III to yield coproporphyrinogen-III. The sequence is that of Uroporphyrinogen decarboxylase from Synechococcus sp. (strain CC9902).